The chain runs to 4293 residues: Polycystin-1 (4293 aa).

The signal sequence occupies residues 1-23 (MPLGAPALLALALGLGLWLGALA). The region spanning 24–67 (GDPGRGCGPCPLPCFCGPAPDAACRVNCSGRWLQTLGPSLRIPA) is the LRRNT domain. The Extracellular portion of the chain corresponds to 24–3066 (GDPGRGCGPC…IFPEPSASIN (3043 aa)). 2 N-linked (GlcNAc...) asparagine glycosylation sites follow: Asn50 and Asn89. LRR repeat units lie at residues 68–91 (DATA…VNLS) and 92–113 (ALVE…VFAN). 2 N-linked (GlcNAc...) asparagine glycosylation sites follow: Asn116 and Asn121. Residues 125–178 (NPFECNCGLAWLPRWAKEHQVHVVQSEATTCRGPIPLAGQPLLSIPLLDNACGE) form the LRRCT domain. One can recognise a WSC domain in the interval 177–271 (GEEYVACLPD…PTLLQHTFPA (95 aa)). Asn187 and Asn239 each carry an N-linked (GlcNAc...) asparagine glycan. The PKD 1 domain maps to 272–359 (SPGATLVGPH…VQVEATPTVL (88 aa)). N-linked (GlcNAc...) asparagine glycosylation occurs at Asn370. In terms of domain architecture, C-type lectin spans 415–530 (GNGHCYRLVA…CSAPHSYVCE (116 aa)). 2 cysteine pairs are disulfide-bonded: Cys436–Cys529 and Cys507–Cys521. Positions 613–632 (GGAAAVPEGSSEPDNRTEPA) are disordered. A glycan (N-linked (GlcNAc...) asparagine) is linked at Asn627. One can recognise an LDL-receptor class A; atypical domain in the interval 633 to 666 (PKCVPEELWCPGANVCIPFDASCNSHVCINGSVS). 2 cysteine pairs are disulfide-bonded: Cys635-Cys648 and Cys642-Cys660. Residues Asn662, Asn740, Asn804, Asn835, Asn848, Asn859, Asn884, Asn915, Asn998, Asn1004, Asn1028, Asn1084, Asn1096, Asn1107, Asn1172, Asn1188, Asn1234, Asn1263, Asn1330, Asn1342, Asn1376, Asn1444, Asn1449, Asn1468, Asn1535, Asn1548, Asn1557, Asn1643, Asn1657, Asn1706, Asn1730, Asn1788, Asn1831, Asn1863, and Asn1876 are each glycosylated (N-linked (GlcNAc...) asparagine). PKD domains are found at residues 849 to 922 (ATAT…RVTA), 929 to 1014 (LRAV…NKMH), 1017 to 1123 (WVSA…LPNV), 1121 to 1209 (PNVA…LHGL), 1207 to 1292 (HGLT…EVLH), 1288 to 1377 (LEVL…IRNI), 1376 to 1463 (NITL…VLVT), 1462 to 1545 (VTGI…VRGL), 1544 to 1629 (GLTI…IEGL), 1630 to 1718 (QVAG…VESL), 1716 to 1802 (ESLI…VGGL), 1804 to 1886 (IRTS…IVNL), 1885 to 1970 (NLML…VVGL), 1972 to 2053 (VPNC…MVEV), and 2056 to 2144 (IIQY…ACRE). Residues Asn1987, Asn2046, Asn2070, Asn2121, Asn2244, Asn2349, Asn2391, Asn2408, Asn2414, Asn2563, Asn2640, Asn2713, Asn2749, Asn2813, Asn2836, Asn2873, Asn2948, and Asn2986 are each glycosylated (N-linked (GlcNAc...) asparagine). Residues 2142–2828 (CREPEVEVAL…QLIFLVDSNP (687 aa)) enclose the REJ domain. One can recognise a GAIN-B domain in the interval 2857 to 3055 (PIEQLAAERA…SLFVPPSHVQ (199 aa)). Cys3007 and Cys3035 form a disulfide bridge. The GPS stretch occupies residues 3007–3055 (CQYFSEEMMMWRTEGIVPLEETSPSQAVCLTRHLTAFGASLFVPPSHVQ). Residues 3067-3087 (YIVLLTCVICLVTYVVMAMIL) traverse the membrane as a helical segment. At 3088–3269 (RKLDQLDVSR…DRPPRSRFTR (182 aa)) the chain is on the cytoplasmic side. A PLAT domain is found at 3110 to 3225 (FKYEILVKTG…EANGGLVEKE (116 aa)). The chain crosses the membrane as a helical span at residues 3270–3290 (VQRVTCCVLLLCLFLAANAVW). Residues 3291–3315 (YGVVRDTTYSMGPVSSLISPGVDTV) lie on the Extracellular side of the membrane. Residues 3316–3336 (AIGLVSSVVVYPVYLAVLFLF) form a helical membrane-spanning segment. The Cytoplasmic segment spans residues 3337-3549 (RMSRSKVSGD…LPAWCAPLAH (213 aa)). A helical transmembrane segment spans residues 3550–3570 (GLSLLLVAVAVAVSGWIGASF). At 3571–3572 (PP) the chain is on the extracellular side. A helical membrane pass occupies residues 3573–3593 (SVSVMWLLSSSSSFLASFLGW). Over 3594-3655 (EPLKVLLEAL…LAKEEARKVK (62 aa)) the chain is Cytoplasmic. Residues 3656–3676 (RLHDMLKRLLVYMLFLLVTLL) form a helical membrane-spanning segment. The Extracellular segment spans residues 3677 to 3891 (ANYGDASCHG…RLSTGLSLPL (215 aa)). Asn3728 and Asn3780 each carry an N-linked (GlcNAc...) asparagine glycan. The helical transmembrane segment at 3892-3912 (LTSVCLLLFALYFSMAEVQTW) threads the bilayer. Topologically, residues 3913–3925 (RKDGCACTARPDT) are cytoplasmic. The helical transmembrane segment at 3926–3946 (WARCLLVILTAATGLVRLAQL) threads the bilayer. Residues 3947–3974 (GIADRQWTHFVQDHPRHFTSFDQVAQLG) lie on the Extracellular side of the membrane. A helical membrane pass occupies residues 3975-3995 (SVARGLAASLLFLLLVKAAQQ). Residues 3996–4017 (LRFVRQWSVFGKTLCRALPELM) lie on the Cytoplasmic side of the membrane. A helical membrane pass occupies residues 4018–4038 (GATLGLVLLGVAYAQMAILLI). Over 4039 to 4080 (SSGADTLYNMARAFLVLCPGARVPTLCPSESWYLSPLLCVGL) the chain is Extracellular. A helical membrane pass occupies residues 4081-4100 (WALRVWGALRLGAILLRWRY). The Cytoplasmic portion of the chain corresponds to 4101-4293 (HALRGELYRP…PNNKVHPSST (193 aa)). Disordered stretches follow at residues 4150–4197 (PLPS…STLK) and 4235–4293 (SLQG…PSST). Residues 4153 to 4172 (SRSSRGSKSSPVVLPPSSGS) are compositionally biased toward low complexity. Ser4156 bears the Phosphoserine; by PRKX; in vitro mark. Residues 4173–4195 (EASHPSTSSSQPDGPSASLSRST) show a composition bias toward polar residues. Positions 4210–4241 (ESLLVQFDRLNQATEDVYQLEQQLQSLQGHGH) form a coiled coil. Residues 4238-4256 (GHGHNGPPSSPSPGCFPGS) show a composition bias toward low complexity. Polar residues predominate over residues 4265-4276 (SRASQGLDQTVG).

The protein belongs to the polycystin family. In terms of assembly, component of the heterotetrameric polycystin channel complex with PKD2; the tetramer contains one PKD1 chain and three PKD2 chains. Interacts with PKD2; the interaction is required for ciliary localization. Interacts with PKD2L1. Interacts with PRKX; involved in differentiation and controlled morphogenesis of the kidney. Interacts (via extracellular domain) with WNT3A, WNT4 and WNT9B. Interacts with WNT5A, DVL1 and DVL2. Interacts with NPHP1 (via SH3 domain). Interacts with BBS1, BBS4, BBS5 and TTC8. Interacts with RGS7. Interacts (via C-terminal domain) with RABEP1; the interaction connects PKD1:PKD2 to GGA1 and ARL3 that mediate the ciliary targeting. Interacts (via the PKD repeats in the N-terminal extracellular region) with EPCIP; the interaction is not dependent on N-glycosylation of either protein. Post-translationally, N-glycosylated. After synthesis, undergoes autoproteolytic cleavage between Leu-3040 and Thr-3041 in the GPS region of the GAIN-B domain. Cleavage at the GPS region occurs through a cis-autoproteolytic mechanism involving an ester-intermediate via N-O acyl rearrangement. This process takes place in the early secretory pathway, depends on initial N-glycosylation, and requires the REJ domain. PKD1 is ubiquitously and incompletely cleaved in wild-type mice, so that uncleaved and cleaved PKD1 molecules coexist. The differential patterns of cleavage during embryonic development, as well as in adult mice, suggest different functions of uncleaved and cleaved molecules.

It is found in the cell membrane. The protein localises to the cell projection. Its subcellular location is the cilium. It localises to the endoplasmic reticulum. The protein resides in the golgi apparatus. It is found in the vesicle. The protein localises to the secreted. Its subcellular location is the extracellular exosome. In terms of biological role, component of a heteromeric calcium-permeable ion channel formed by PKD1 and PKD2 that is activated by interaction between PKD1 and a Wnt family member, such as WNT3A and WNT9B. Both PKD1 and PKD2 are required for channel activity. Involved in renal tubulogenesis. Involved in fluid-flow mechanosensation by the primary cilium in renal epithelium. Acts as a regulator of cilium length, together with PKD2. The dynamic control of cilium length is essential in the regulation of mechanotransductive signaling. The cilium length response creates a negative feedback loop whereby fluid shear-mediated deflection of the primary cilium, which decreases intracellular cAMP, leads to cilium shortening and thus decreases flow-induced signaling. May be an ion-channel regulator. Involved in adhesive protein-protein and protein-carbohydrate interactions. Likely to be involved with polycystin-1-interacting protein 1 in the detection, sequestration and exocytosis of senescent mitochondria. The sequence is that of Polycystin-1 from Mus musculus (Mouse).